The chain runs to 1170 residues: MASSGGGGLRHSNSSRLSRMSYSGEDGRAQAPGGGGDRPMVTFARRTHSGRYVSYSRDDLDSELGNSGDMSPESGQEFLNYHVTIPATPDNQPMDPAISARVEEQYVSNSLFTGGFNSVTRAHLMDKVIESEASHPQMAGAKGSSCAINGCDAKVMSDERGDDILPCECDFKICADCFADAVKNGGACPGCKDPYKATELDDVVGARPTLSLPPPPGGLPASRMERRLSIMRSQKAMTRSQTGDWDHNRWLFETKGTYGYGNAIWPKENEVDNGGGGGGGGGLGGGDGQPAEFTSKPWRPLTRKLKIPAGVLSPYRLLILIRMAVLGLFLAWRIKHKNEDAMWLWGMSVVCELWFGLSWLLDQLPKLCPVNRATDLAVLKDKFETPTPSNPNGRSDLPGLDIFVSTADPEKEPPLVTANTILSILAADYPVEKLSCYVSDDGGALLTFEAMAEAASFANMWVPFCRKHDIEPRNPESYFNLKRDPYKNKVRSDFVKDRRRVKREYDEFKVRINSLPDSIRRRSDAYHAREEIKAMKRQREAALDDVVEAVKIPKATWMADGTHWPGTWIQPSAEHARGDHAGIIQVMLKPPSDDPLYGTSGEEGRPLDFTEVDIRLPMLVYVSREKRPGYDHNKKAGAMNALVRSSAVMSNGPFILNLDCDHYVYNSQAFREGMCFMMDRGGDRIGYVQFPQRFEGIDPSDRYANHNTVFFDVNMRALDGIMGPVYVGTGCLFRRIALYGFDPPRSKEHSGCCSCCFPQRRKVKTSTVASEERQALRMADFDDEEMNMSQFPKKFGNSNFLINSIPIAEFQGRPLADHPGVKNGRPPGALTVPRDLLDASTVAEAISVISCWYEDKTEWGQRVGWIYGSVTEDVVTGYRMHNRGWKSVYCVTKRDAFRGTAPINLTDRLHQVLRWATGSVEIFFSRNNALLASRKMKFLQRIAYLNVGIYPFTSIFLIVYCFLPALSLFSGQFIVRTLNVTFLTYLLVITLTMCMLAVLEIKWSGISLEEWWRNEQFWLIGGTSAHLAAVLQGLLKVIAGIEISFTLTSKSGGDEADDEFADLYIVKWTSLMIPPIVIMMVNLIAIAVGFSRTIYSEIPQWSKLLGGVFFSFWVLAHLYPFAKGLMGRRGRTPTIVFVWSGLLAITISLLWVAINPPSQNSQIGGSFTFP.

Disordered stretches follow at residues 1–48, 54–73, and 269–295; these read MASS…RRTH, SYSRDDLDSELGNSGDMSPE, and NEVDNGGGGGGGGGLGGGDGQPAEFTS. Residues 10 to 24 are compositionally biased toward low complexity; sequence RHSNSSRLSRMSYSG. Residues 273–288 show a composition bias toward gly residues; it reads NGGGGGGGGGLGGGDG. A run of 2 helical transmembrane segments spans residues 311-331 and 341-361; these read VLSPYRLLILIRMAVLGLFLA and AMWLWGMSVVCELWFGLSWLL. Aspartate 441 is a catalytic residue. Residues 527–551 adopt a coiled-coil conformation; the sequence is HAREEIKAMKRQREAALDDVVEAVK. Aspartate 873 is an active-site residue. The next 6 helical transmembrane spans lie at 955–975, 981–1001, 1027–1047, 1070–1090, 1104–1124, and 1134–1154; these read IFLIVYCFLPALSLFSGQFIV, TFLTYLLVITLTMCMLAVLEI, LAAVLQGLLKVIAGIEISFTL, SLMIPPIVIMMVNLIAIAVGF, LLGGVFFSFWVLAHLYPFAKG, and TIVFVWSGLLAITISLLWVAI.

It belongs to the glycosyltransferase 2 family. Plant cellulose synthase-like D subfamily.

The protein resides in the golgi apparatus membrane. In terms of biological role, thought to be a Golgi-localized beta-glycan synthase that polymerize the backbones of noncellulosic polysaccharides (hemicelluloses) of plant cell wall. This is Cellulose synthase-like protein D2 (CSLD2) from Oryza sativa subsp. japonica (Rice).